A 108-amino-acid chain; its full sequence is uncharacterized protein (108 aa).

This is an uncharacterized protein from Archaeoglobus fulgidus (strain ATCC 49558 / DSM 4304 / JCM 9628 / NBRC 100126 / VC-16).